The primary structure comprises 353 residues: Phosphate acyltransferase (353 aa).

Belongs to the PlsX family. As to quaternary structure, homodimer. Probably interacts with PlsY.

The protein localises to the cytoplasm. The enzyme catalyses a fatty acyl-[ACP] + phosphate = an acyl phosphate + holo-[ACP]. Its pathway is lipid metabolism; phospholipid metabolism. In terms of biological role, catalyzes the reversible formation of acyl-phosphate (acyl-PO(4)) from acyl-[acyl-carrier-protein] (acyl-ACP). This enzyme utilizes acyl-ACP as fatty acyl donor, but not acyl-CoA. This chain is Phosphate acyltransferase, found in Nitrosospira multiformis (strain ATCC 25196 / NCIMB 11849 / C 71).